A 226-amino-acid chain; its full sequence is Probable N-acetyl-alpha-D-glucosaminyl L-malate deacetylase 2 (226 aa).

Zn(2+)-binding residues include His13, Asp16, and His127.

The protein belongs to the PIGL family. The cofactor is Zn(2+).

The catalysed reaction is (S)-malyl N-acetyl-alpha-D-glucosaminide + H2O = (S)-malyl alpha-D-glucosaminide + acetate. Functionally, involved in bacillithiol (BSH) biosynthesis. Catalyzes the second step of the pathway, the deacetylation of N-acetylglucosaminylmalate (GlcNAc-Mal) to glucosamine malate (GlcN-Mal). Could also be involved in bacillithiol-detoxifying pathways through formation of S-mercapturic adducts. The sequence is that of Probable N-acetyl-alpha-D-glucosaminyl L-malate deacetylase 2 from Bacillus anthracis.